The chain runs to 407 residues: Argininosuccinate synthase (407 aa).

ATP is bound by residues 12-20 and A39; that span reads AYSGGLDTS. The L-citrulline site is built by Y92 and S97. G122 lines the ATP pocket. L-aspartate contacts are provided by T124, N128, and D129. Residue N128 coordinates L-citrulline. L-citrulline contacts are provided by R132, S183, S192, E268, and Y280.

This sequence belongs to the argininosuccinate synthase family. Type 1 subfamily. In terms of assembly, homotetramer.

Its subcellular location is the cytoplasm. It carries out the reaction L-citrulline + L-aspartate + ATP = 2-(N(omega)-L-arginino)succinate + AMP + diphosphate + H(+). It functions in the pathway amino-acid biosynthesis; L-arginine biosynthesis; L-arginine from L-ornithine and carbamoyl phosphate: step 2/3. This Caulobacter sp. (strain K31) protein is Argininosuccinate synthase.